The sequence spans 648 residues: MAGAAALRRSARRVVRPGAYALSRALQHPERLLSSQASPDRGGVLGSELGRYPPERVRNFSIIAHVDHGKSTLADRLLELTGTIKKGHGQPQYLDKLQVERERGITVKAQTATMFYRHANNQLPASDQPDAPSYLLNLIDTPGHVDFSYEVSRSLAACQGALLVVDAAQGVQAQTIANFYLAFESNLSIIPVINKIDQPTADPDNVKAQLKRLFDIDPSEALLTSAKTGQGLSQVLPAVIERIPSPPGKCDSPVRMLLLDSYYDEYKGVICHVAVVDGALHKGDKIASAATGRTYEVLDVGIMHPELTPTGVLYTGQVGYVISGMRSTKEARIGDTLHQAKSIVEPLPGFKPARHMVFSGLYPADGSDFDALSHAIEKLTCNDASVSVTKETSTALGMGFRCGFLGLLHMDVFHQRLEQEHGAQVISTIPTVPYIFEYGDGSKVQVENPAALASNPGKRIAACWEPTVIATIIIPKVLRLPNRFFSQRALLKYRLPLREIIVDFYNELKSITSGYATFDYEDSEYQQSDLVKMDILLNGQPVDAMATIVHNQKAQRVGRELVDKLKKFIERQMFEITIQAAVGSKVIARETLSAMRKNVLAKCYGGDITRKKKLLEKQKEGKKRMKRVGSVDIPQEAFHELLKVSNSK.

The 193-residue stretch at 55 to 247 (ERVRNFSIIA…AVIERIPSPP (193 aa)) folds into the tr-type G domain. Residues 64-71 (AHVDHGKS), 140-144 (DTPGH), and 194-197 (NKID) contribute to the GTP site.

This sequence belongs to the TRAFAC class translation factor GTPase superfamily. Classic translation factor GTPase family. LepA subfamily.

The protein resides in the mitochondrion inner membrane. The enzyme catalyses GTP + H2O = GDP + phosphate + H(+). Its function is as follows. Promotes mitochondrial protein synthesis. May act as a fidelity factor of the translation reaction, by catalyzing a one-codon backward translocation of tRNAs on improperly translocated ribosomes. Binds to mitochondrial ribosomes in a GTP-dependent manner. The chain is Translation factor GUF1 homolog, mitochondrial from Oryza sativa subsp. indica (Rice).